A 78-amino-acid chain; its full sequence is Probable Fe(2+)-trafficking protein (78 aa).

This sequence belongs to the Fe(2+)-trafficking protein family. In terms of assembly, monomer.

Its function is as follows. Could be a mediator in iron transactions between iron acquisition and iron-requiring processes, such as synthesis and/or repair of Fe-S clusters in biosynthetic enzymes. The polypeptide is Probable Fe(2+)-trafficking protein (Wigglesworthia glossinidia brevipalpis).